The primary structure comprises 446 residues: Methylenetetrahydrofolate--tRNA-(uracil-5-)-methyltransferase TrmFO (446 aa).

8-13 contributes to the FAD binding site; that stretch reads GAGLAG.

Belongs to the MnmG family. TrmFO subfamily. It depends on FAD as a cofactor.

It localises to the cytoplasm. The enzyme catalyses uridine(54) in tRNA + (6R)-5,10-methylene-5,6,7,8-tetrahydrofolate + NADH + H(+) = 5-methyluridine(54) in tRNA + (6S)-5,6,7,8-tetrahydrofolate + NAD(+). It carries out the reaction uridine(54) in tRNA + (6R)-5,10-methylene-5,6,7,8-tetrahydrofolate + NADPH + H(+) = 5-methyluridine(54) in tRNA + (6S)-5,6,7,8-tetrahydrofolate + NADP(+). In terms of biological role, catalyzes the folate-dependent formation of 5-methyl-uridine at position 54 (M-5-U54) in all tRNAs. The polypeptide is Methylenetetrahydrofolate--tRNA-(uracil-5-)-methyltransferase TrmFO (Paracoccus denitrificans (strain Pd 1222)).